Consider the following 362-residue polypeptide: Guanine nucleotide-binding protein alpha-10 subunit (362 aa).

Glycine 2 is lipidated: N-myristoyl glycine. Cysteine 4 carries the S-palmitoyl cysteine lipid modification. The region spanning 35 to 362 (LEQSVLLIGP…QENLKDTGMI (328 aa)) is the G-alpha domain. The segment at 38 to 51 (SVLLIGPGESGKST) is G1 motif. Residues 43 to 50 (GPGESGKS), 184 to 190 (VRIRVPT), 209 to 213 (DCGGQ), 278 to 281 (NKID), and alanine 335 each bind GTP. Serine 50 and threonine 190 together coordinate Mg(2+). The interval 182 to 190 (DIVRIRVPT) is G2 motif. Residues 205–214 (LSVIDCGGQR) are G3 motif. A G4 motif region spans residues 274–281 (ILFLNKID). The tract at residues 333-337 (TCAIS) is G5 motif.

The protein belongs to the G-alpha family. As to quaternary structure, g proteins are composed of 3 units; alpha, beta and gamma. The alpha chain contains the guanine nucleotide binding site.

Functionally, guanine nucleotide-binding proteins (G proteins) are involved as modulators or transducers in various transmembrane signaling systems. This Caenorhabditis briggsae protein is Guanine nucleotide-binding protein alpha-10 subunit (gpa-10).